Reading from the N-terminus, the 170-residue chain is Peptide deformylase (170 aa).

The Fe cation site is built by Cys-93 and His-135. Residue Glu-136 is part of the active site. Residue His-139 participates in Fe cation binding.

The protein belongs to the polypeptide deformylase family. The cofactor is Fe(2+).

It catalyses the reaction N-terminal N-formyl-L-methionyl-[peptide] + H2O = N-terminal L-methionyl-[peptide] + formate. Removes the formyl group from the N-terminal Met of newly synthesized proteins. Requires at least a dipeptide for an efficient rate of reaction. N-terminal L-methionine is a prerequisite for activity but the enzyme has broad specificity at other positions. The protein is Peptide deformylase of Acidobacterium capsulatum (strain ATCC 51196 / DSM 11244 / BCRC 80197 / JCM 7670 / NBRC 15755 / NCIMB 13165 / 161).